The primary structure comprises 33 residues: Protamine-1B (33 aa).

A disordered region spans residues 1-33 (PRRRRRRSSSRPIRRRRPRRVSRRRRRGGRRRR).

Testis.

The protein resides in the nucleus. It is found in the chromosome. Functionally, protamines substitute for histones in the chromatin of sperm during the haploid phase of spermatogenesis. They compact sperm DNA into a highly condensed, stable and inactive complex. In Oncorhynchus mykiss (Rainbow trout), this protein is Protamine-1B.